Reading from the N-terminus, the 82-residue chain is Neuropeptide-like peptide 36 (82 aa).

This chain is Neuropeptide-like peptide 36 (nlp-36), found in Caenorhabditis elegans.